The following is a 437-amino-acid chain: Major royal jelly protein 6 (437 aa).

An N-terminal signal peptide occupies residues Met1–Ser20. Residues Asn78, Asn164, Asn181, Asn201, and Asn324 are each glycosylated (N-linked (GlcNAc...) asparagine).

The protein belongs to the major royal jelly protein family. Found in and secreted from the hypopharyngeal glands of the worker honey bee (at protein level); expression peaks at 20 days post eclosion. Expressed in the spermatheca of adult queen bees (at protein level); Expression levels are higher in mated queens than in virgin queens. Expressed at low level in the brains of adult worker bees. Protein abundance does not seem to correlate with transcript abundance.

The protein localises to the secreted. Its function is as follows. Component of royal jelly, a substance produced in the hypopharyngeal gland containing proteins, free amino acids, fatty acids, sugars and other nutrients, which is fed to developing larvae by worker nurse bees. All larvae are fed some royal jelly (also known as worker jelly) early in their development but it forms the principal source of nutrition for larvae destined to become queen bees. Produced in the spermatheca of adult queen bees, along with other major royal jelly proteins, where it may act as a nutrient supply for sperm stored by mated queens, or be involved in energy metabolism. The polypeptide is Major royal jelly protein 6 (Apis mellifera (Honeybee)).